The following is a 288-amino-acid chain: Fructose-bisphosphate aldolase (288 aa).

S49 contacts D-glyceraldehyde 3-phosphate. D84 acts as the Proton donor in catalysis. 4 residues coordinate Zn(2+): H85, D105, E135, and H177. G178 is a dihydroxyacetone phosphate binding site. H206 contributes to the Zn(2+) binding site. Dihydroxyacetone phosphate is bound by residues 207-209 (GGS) and 228-231 (NINT).

Belongs to the class II fructose-bisphosphate aldolase family. As to quaternary structure, homodimer. The cofactor is Zn(2+).

The enzyme catalyses beta-D-fructose 1,6-bisphosphate = D-glyceraldehyde 3-phosphate + dihydroxyacetone phosphate. Its pathway is carbohydrate degradation; glycolysis; D-glyceraldehyde 3-phosphate and glycerone phosphate from D-glucose: step 4/4. Its function is as follows. Catalyzes the aldol condensation of dihydroxyacetone phosphate (DHAP or glycerone-phosphate) with glyceraldehyde 3-phosphate (G3P) to form fructose 1,6-bisphosphate (FBP) in gluconeogenesis and the reverse reaction in glycolysis. The chain is Fructose-bisphosphate aldolase (fba) from Mycoplasma genitalium (strain ATCC 33530 / DSM 19775 / NCTC 10195 / G37) (Mycoplasmoides genitalium).